Reading from the N-terminus, the 195-residue chain is NADH-quinone oxidoreductase subunit B (195 aa).

Cysteine 74, cysteine 75, cysteine 139, and cysteine 169 together coordinate [4Fe-4S] cluster.

It belongs to the complex I 20 kDa subunit family. In terms of assembly, NDH-1 is composed of 14 different subunits. Subunits NuoB, C, D, E, F, and G constitute the peripheral sector of the complex. It depends on [4Fe-4S] cluster as a cofactor.

The protein resides in the cell inner membrane. The catalysed reaction is a quinone + NADH + 5 H(+)(in) = a quinol + NAD(+) + 4 H(+)(out). Its function is as follows. NDH-1 shuttles electrons from NADH, via FMN and iron-sulfur (Fe-S) centers, to quinones in the respiratory chain. The immediate electron acceptor for the enzyme in this species is believed to be ubiquinone. Couples the redox reaction to proton translocation (for every two electrons transferred, four hydrogen ions are translocated across the cytoplasmic membrane), and thus conserves the redox energy in a proton gradient. The protein is NADH-quinone oxidoreductase subunit B of Methylorubrum populi (strain ATCC BAA-705 / NCIMB 13946 / BJ001) (Methylobacterium populi).